A 152-amino-acid chain; its full sequence is Gamma-glutamylaminecyclotransferase C (152 aa).

9–12 (YGSL) is a substrate binding site. The active-site Proton acceptor is E84.

The protein belongs to the gamma-glutamylcyclotransferase family.

The catalysed reaction is epsilon-(gamma-L-glutamyl)-L-lysine = 5-oxo-L-proline + L-lysine. Its function is as follows. May contribute to degradation of proteins cross-linked by transglutaminases by degrading the cross-link between a lysine and a glutamic acid residue. Catalyzes the formation of 5-oxo-L-proline from L-gamma-glutamyl-L-epsilon-lysine. This chain is Gamma-glutamylaminecyclotransferase C (ggact.3), found in Danio rerio (Zebrafish).